A 504-amino-acid chain; its full sequence is Phosphoenolpyruvate carboxylase (504 aa).

Positions 1–16 (MTSRKIPSIMGTQHPD) are enriched in polar residues. Residues 1 to 21 (MTSRKIPSIMGTQHPDNANAP) form a disordered region.

Belongs to the PEPCase type 2 family. As to quaternary structure, homotetramer. Mg(2+) serves as cofactor.

The enzyme catalyses oxaloacetate + phosphate = phosphoenolpyruvate + hydrogencarbonate. In terms of biological role, catalyzes the irreversible beta-carboxylation of phosphoenolpyruvate (PEP) to form oxaloacetate (OAA), a four-carbon dicarboxylic acid source for the tricarboxylic acid cycle. The protein is Phosphoenolpyruvate carboxylase of Leuconostoc mesenteroides subsp. mesenteroides (strain ATCC 8293 / DSM 20343 / BCRC 11652 / CCM 1803 / JCM 6124 / NCDO 523 / NBRC 100496 / NCIMB 8023 / NCTC 12954 / NRRL B-1118 / 37Y).